The sequence spans 58 residues: Large ribosomal subunit protein bL32c (58 aa).

The disordered stretch occupies residues 1-23 (MAVPKKRTSKAKKNARKSVWKKK).

The protein belongs to the bacterial ribosomal protein bL32 family.

It is found in the plastid. Its subcellular location is the chloroplast. The polypeptide is Large ribosomal subunit protein bL32c (rpl32-A) (Trieres chinensis (Marine centric diatom)).